A 147-amino-acid polypeptide reads, in one-letter code: Large ribosomal subunit protein uL13 (147 aa).

Belongs to the universal ribosomal protein uL13 family. Part of the 50S ribosomal subunit.

This protein is one of the early assembly proteins of the 50S ribosomal subunit, although it is not seen to bind rRNA by itself. It is important during the early stages of 50S assembly. This Mycobacterium leprae (strain Br4923) protein is Large ribosomal subunit protein uL13.